The following is a 319-amino-acid chain: tRNA uridine(34) hydroxylase (319 aa).

Residues 127 to 221 (KQEDTVIIDA…YGKDPEVQGE (95 aa)) enclose the Rhodanese domain. Catalysis depends on Cys181, which acts as the Cysteine persulfide intermediate.

This sequence belongs to the TrhO family.

It carries out the reaction uridine(34) in tRNA + AH2 + O2 = 5-hydroxyuridine(34) in tRNA + A + H2O. Functionally, catalyzes oxygen-dependent 5-hydroxyuridine (ho5U) modification at position 34 in tRNAs. The sequence is that of tRNA uridine(34) hydroxylase from Bacillus cereus (strain AH187).